The sequence spans 176 residues: Heme oxygenase HutZ (176 aa).

Residue His-170 coordinates heme.

It belongs to the heme oxygenase HugZ/HutZ family. In terms of assembly, homodimer. Interacts with HutX, leading to the transfer of the heme from HutX to apo-HutZ.

The enzyme catalyses heme b + 3 AH2 + 3 O2 + 2 H(+) = biliverdin IXbeta + CO + Fe(2+) + 3 A + 3 H2O. It catalyses the reaction heme b + 3 AH2 + 3 O2 + 3 H(+) = biliverdin IXdelta + CO + Fe(2+) + 3 A + 3 H2O. Activity is pH-dependent. A proximal hydrogen bond between Asp-132 and the heme axial ligant His-170 is essential for heme degradation activity. Heme-degradation reaction is inhibited by iron chelators. Its function is as follows. Involved in heme degradation. Catalyzes the degradation of heme to biliverdin, with the release of iron. Forms biliverdin beta and delta. Binds heme with high efficiency. The chain is Heme oxygenase HutZ from Vibrio cholerae serotype O1 (strain ATCC 39315 / El Tor Inaba N16961).